A 482-amino-acid polypeptide reads, in one-letter code: Glutamyl-tRNA(Gln) amidotransferase subunit A (482 aa).

Catalysis depends on charge relay system residues K80 and S159. S183 functions as the Acyl-ester intermediate in the catalytic mechanism.

The protein belongs to the amidase family. GatA subfamily. In terms of assembly, heterotrimer of A, B and C subunits.

The catalysed reaction is L-glutamyl-tRNA(Gln) + L-glutamine + ATP + H2O = L-glutaminyl-tRNA(Gln) + L-glutamate + ADP + phosphate + H(+). Its function is as follows. Allows the formation of correctly charged Gln-tRNA(Gln) through the transamidation of misacylated Glu-tRNA(Gln) in organisms which lack glutaminyl-tRNA synthetase. The reaction takes place in the presence of glutamine and ATP through an activated gamma-phospho-Glu-tRNA(Gln). This chain is Glutamyl-tRNA(Gln) amidotransferase subunit A, found in Neorickettsia sennetsu (strain ATCC VR-367 / Miyayama) (Ehrlichia sennetsu).